The sequence spans 153 residues: Aspartate carbamoyltransferase regulatory chain (153 aa).

The Zn(2+) site is built by cysteine 109, cysteine 114, cysteine 138, and cysteine 141.

This sequence belongs to the PyrI family. As to quaternary structure, contains catalytic and regulatory chains. It depends on Zn(2+) as a cofactor.

In terms of biological role, involved in allosteric regulation of aspartate carbamoyltransferase. In Vibrio vulnificus (strain YJ016), this protein is Aspartate carbamoyltransferase regulatory chain.